Here is a 171-residue protein sequence, read N- to C-terminus: 3-hydroxydecanoyl-[acyl-carrier-protein] dehydratase (171 aa).

His71 is an active-site residue.

This sequence belongs to the thioester dehydratase family. FabA subfamily. In terms of assembly, homodimer.

The protein resides in the cytoplasm. It carries out the reaction a (3R)-hydroxyacyl-[ACP] = a (2E)-enoyl-[ACP] + H2O. It catalyses the reaction (3R)-hydroxydecanoyl-[ACP] = (2E)-decenoyl-[ACP] + H2O. The enzyme catalyses (2E)-decenoyl-[ACP] = (3Z)-decenoyl-[ACP]. Its pathway is lipid metabolism; fatty acid biosynthesis. Its function is as follows. Necessary for the introduction of cis unsaturation into fatty acids. Catalyzes the dehydration of (3R)-3-hydroxydecanoyl-ACP to E-(2)-decenoyl-ACP and then its isomerization to Z-(3)-decenoyl-ACP. Can catalyze the dehydratase reaction for beta-hydroxyacyl-ACPs with saturated chain lengths up to 16:0, being most active on intermediate chain length. The protein is 3-hydroxydecanoyl-[acyl-carrier-protein] dehydratase of Rhizobium rhizogenes (strain K84 / ATCC BAA-868) (Agrobacterium radiobacter).